We begin with the raw amino-acid sequence, 348 residues long: MHGQKNISERYQKFKEMEGTGKIVCVTGGAGYLASWLIMRLLERGYSVRTTVRSDPKFREDVSHLKALPEATEKLQIFEADLENPESFDDAINGCVGVFLVAQGMNFAEEYTLEKIIKTCVEGTLRILQSCLKSKTVKKVVYTSSADAAMMISNLKAVKEIDETIWSEVDNFISKPEQVIPGLPSYVVSKVLTERACLKFSEEHGLDVVTILPPLVVGPFITPHPPPSVSIALSIISGDVSMMLGVRLENAVHIDDVALAHIFVFECEKAKGRHICSSVDFPMHDLPKFISENYPEFNVPTDLLKDIEEQEPVHLSSDKLLSMGFQFKYDFAEIFGDAIRCAKEKGFL.

The protein belongs to the NAD(P)-dependent epimerase/dehydratase family.

It catalyses the reaction narcotine hemiacetal + NAD(+) = noscapine + NADH + H(+). Its pathway is alkaloid biosynthesis. Its function is as follows. Oxidoreductase that catalyzes the last step in the biosynthesis of the benzylisoquinoline alkaloid noscapine. Converts narcotine hemiacetal to noscapine. This chain is Noscapine synthase SDR1, found in Papaver somniferum (Opium poppy).